Consider the following 391-residue polypeptide: DNA-directed RNA polymerase subunit Rpo1C (391 aa).

This sequence belongs to the RNA polymerase beta' chain family. In terms of assembly, part of the RNA polymerase complex.

Its subcellular location is the cytoplasm. The catalysed reaction is RNA(n) + a ribonucleoside 5'-triphosphate = RNA(n+1) + diphosphate. Functionally, DNA-dependent RNA polymerase (RNAP) catalyzes the transcription of DNA into RNA using the four ribonucleoside triphosphates as substrates. Forms part of the jaw domain. The protein is DNA-directed RNA polymerase subunit Rpo1C of Thermococcus onnurineus (strain NA1).